The primary structure comprises 361 residues: Chorismate synthase (361 aa).

NADP(+) contacts are provided by Arg48 and Arg54. FMN is bound by residues 125–127, 238–239, Gly278, 293–297, and Arg319; these read RSS, NA, and KPTSS.

Belongs to the chorismate synthase family. In terms of assembly, homotetramer. Requires FMNH2 as cofactor.

It carries out the reaction 5-O-(1-carboxyvinyl)-3-phosphoshikimate = chorismate + phosphate. The protein operates within metabolic intermediate biosynthesis; chorismate biosynthesis; chorismate from D-erythrose 4-phosphate and phosphoenolpyruvate: step 7/7. Functionally, catalyzes the anti-1,4-elimination of the C-3 phosphate and the C-6 proR hydrogen from 5-enolpyruvylshikimate-3-phosphate (EPSP) to yield chorismate, which is the branch point compound that serves as the starting substrate for the three terminal pathways of aromatic amino acid biosynthesis. This reaction introduces a second double bond into the aromatic ring system. The polypeptide is Chorismate synthase (Salmonella arizonae (strain ATCC BAA-731 / CDC346-86 / RSK2980)).